We begin with the raw amino-acid sequence, 687 residues long: Ribonuclease E (687 aa).

Positions 35–117 constitute an S1 motif domain; that stretch reads GDIYLGVVEN…LTGNITLPGR (83 aa). 2 residues coordinate Mg(2+): Asp-296 and Asp-339. Positions 397 and 400 each coordinate Zn(2+). The interval 650–687 is disordered; that stretch reads PIKLTETMEESEVNAASTANRRRRRRSSASDSDTGEDS. A C4 Arg-rich motif, necessary and sufficient to confer PNPase binding on another protein motif is present at residues 670–678; sequence RRRRRRSSA.

This sequence belongs to the RNase E/G family. As to quaternary structure, may form homodimers or higher order multimers. Interacts with polynucleotide phosphorylase (PNPase, pnp) via the C4 Arg-rich motif (residues 670-678). A homotetramer formed by a dimer of dimers. The cofactor is Mg(2+). Zn(2+) is required as a cofactor.

The protein localises to the cytoplasm. The catalysed reaction is Endonucleolytic cleavage of single-stranded RNA in A- and U-rich regions.. In terms of biological role, endoribonuclease that plays a central role in rRNA and tRNA processing and mRNA decay. Has been shown to act on 9S rRNA (the precursor of 5S rRNA). The protein is Ribonuclease E of Nostoc sp. (strain PCC 7120 / SAG 25.82 / UTEX 2576).